Reading from the N-terminus, the 888-residue chain is Pyruvate dehydrogenase E1 component (888 aa).

In terms of assembly, homodimer. Part of the PDH complex, consisting of multiple copies of pyruvate dehydrogenase (E1), dihydrolipoamide acetyltransferase (E2) and lipoamide dehydrogenase (E3). Thiamine diphosphate is required as a cofactor.

The enzyme catalyses N(6)-[(R)-lipoyl]-L-lysyl-[protein] + pyruvate + H(+) = N(6)-[(R)-S(8)-acetyldihydrolipoyl]-L-lysyl-[protein] + CO2. Component of the pyruvate dehydrogenase (PDH) complex, that catalyzes the overall conversion of pyruvate to acetyl-CoA and CO(2). This chain is Pyruvate dehydrogenase E1 component (aceE), found in Buchnera aphidicola subsp. Schizaphis graminum (strain Sg).